The sequence spans 386 residues: Alanine racemase 1 (386 aa).

Residue Lys-38 is the Proton acceptor; specific for D-alanine of the active site. N6-(pyridoxal phosphate)lysine is present on Lys-38. Arg-136 is a substrate binding site. The active-site Proton acceptor; specific for L-alanine is Tyr-267. Residue Met-315 coordinates substrate.

It belongs to the alanine racemase family. Pyridoxal 5'-phosphate is required as a cofactor.

The enzyme catalyses L-alanine = D-alanine. The protein operates within amino-acid biosynthesis; D-alanine biosynthesis; D-alanine from L-alanine: step 1/1. Catalyzes the interconversion of L-alanine and D-alanine. May also act on other amino acids. The polypeptide is Alanine racemase 1 (alr1) (Clostridium acetobutylicum (strain ATCC 824 / DSM 792 / JCM 1419 / IAM 19013 / LMG 5710 / NBRC 13948 / NRRL B-527 / VKM B-1787 / 2291 / W)).